A 369-amino-acid polypeptide reads, in one-letter code: MCAFAAILSLLSVLLMATSRSSDAAPLGTLVSVEGVRDNQLVGYGLVVGLNGSGDGQQIRYTGQSIANVLKQFGVTLPEGIRLRSRNVAAVMVSANFPAGYVPGQKIDVTVSSMGDAKSLRGGTLLLTPLRAADGVVYALAQGNLVVPGVSAQGRSGSSVTINATAAGRIPQGATIEQEIPSDLDAKPSVRLSLKRPSFQTATSIVAAIDRMAGPGAATSRDGTSVEVRAPEDPTARVAFLAKLTAINVTPQKEPPRVVFNSRTGTVVISQGMTVSPAAVSHGTLKVTISEGAIVSQPNPLGGGKTAVVPLSQVDVQQDGNRMFNWPAGVSLQKIVDTINSTGASPDDVMAILQALDEAGALNGELVVI.

An N-terminal signal peptide occupies residues 1–24 (MCAFAAILSLLSVLLMATSRSSDA).

The protein belongs to the FlgI family. The basal body constitutes a major portion of the flagellar organelle and consists of four rings (L,P,S, and M) mounted on a central rod.

Its subcellular location is the periplasm. The protein resides in the bacterial flagellum basal body. In terms of biological role, assembles around the rod to form the L-ring and probably protects the motor/basal body from shearing forces during rotation. The protein is Flagellar P-ring protein 2 of Burkholderia thailandensis (strain ATCC 700388 / DSM 13276 / CCUG 48851 / CIP 106301 / E264).